We begin with the raw amino-acid sequence, 598 residues long: Arylsulfate sulfotransferase AssT (598 aa).

Residues 1–27 form the signal peptide; it reads MFDKYRKTLVAGTVAITLGLSASGVMA. Positions 279 and 383 each coordinate 4-methylumbelliferone. Residues Cys445 and Cys451 are joined by a disulfide bond. His463 serves as a coordination point for 4-methylumbelliferone. His463 functions as the Nucleophile; sulfurylated histidine covalent intermediate in the catalytic mechanism.

This sequence belongs to the aryl sulfotransferase family. As to quaternary structure, homodimer. In terms of processing, the disulfide bond is crucial for enzyme activity.

It localises to the periplasm. The enzyme catalyses an aryl sulfate + a phenol = an aryl sulfate + a phenol. The catalysed reaction is 4-methylumbelliferone sulfate + phenol = phenyl sulfate + 4-methylumbelliferone. Functionally, catalyzes the transfer of a sulfate group from a phenyl sulfate ester to other phenolic compounds. In vitro, is able to use 4-methylumbelliferyl sulfate and p-nitrophenyl sulfate (PNS) as donor substrates with phenol as the acceptor substrate. Cannot use 3'-phosphoadenosine-5'-phophosulfate (PAPS), the donor substrate of mammalian sulfotransferase. The sequence is that of Arylsulfate sulfotransferase AssT from Escherichia coli O6:H1 (strain CFT073 / ATCC 700928 / UPEC).